Consider the following 260-residue polypeptide: Carbonic anhydrase 3 (260 aa).

Alanine 2 carries the post-translational modification N-acetylalanine. An Alpha-carbonic anhydrase domain is found at 3-259 (KEWGYASHNG…VKGRVVRASF (257 aa)). 5 positions are modified to phosphoserine: serine 29, serine 43, serine 48, serine 50, and serine 55. The interval 64–67 (KTCR) is involved in proton transfer. Phosphothreonine is present on threonine 73. Zn(2+)-binding residues include histidine 94, histidine 96, and histidine 119. At tyrosine 127 the chain carries Phosphotyrosine. Phosphothreonine occurs at positions 129 and 176. 2 positions are modified to S-glutathionyl cysteine: cysteine 182 and cysteine 187. Residue 198–199 (TT) participates in substrate binding. Threonine 216 carries the phosphothreonine modification. Serine 219 bears the Phosphoserine mark.

It belongs to the alpha-carbonic anhydrase family. It depends on Zn(2+) as a cofactor. S-thiolated both by thiol-disulfide exchange with glutathione disulfide and by oxyradical-initiated S-thiolation with reduced glutathione. In terms of processing, S-glutathionylated in hepatocytes under oxidative stress. As to expression, expressed at lower levels in adipose tissue from animals that were either genetically obese or had experimentally induced obesity.

It is found in the cytoplasm. It carries out the reaction hydrogencarbonate + H(+) = CO2 + H2O. Its activity is regulated as follows. Inhibited by acetazolamide. Functionally, reversible hydration of carbon dioxide. In Mus musculus (Mouse), this protein is Carbonic anhydrase 3.